Reading from the N-terminus, the 475-residue chain is Glycogen synthase (475 aa).

Residue K15 participates in ADP-alpha-D-glucose binding.

The protein belongs to the glycosyltransferase 1 family. Bacterial/plant glycogen synthase subfamily.

The enzyme catalyses [(1-&gt;4)-alpha-D-glucosyl](n) + ADP-alpha-D-glucose = [(1-&gt;4)-alpha-D-glucosyl](n+1) + ADP + H(+). It participates in glycan biosynthesis; glycogen biosynthesis. Its function is as follows. Synthesizes alpha-1,4-glucan chains using ADP-glucose. In Anaeromyxobacter sp. (strain Fw109-5), this protein is Glycogen synthase.